Here is a 463-residue protein sequence, read N- to C-terminus: Glycerol-3-phosphate acyltransferase, chloroplastic (463 aa).

A chloroplast-targeting transit peptide spans 1–91 (MSIFFSPSSP…AATQPSAGSD (91 aa)). Disordered stretches follow at residues 18–37 (NANP…TPPL) and 65–95 (AETV…HGHS). Low complexity-rich tracts occupy residues 24-37 (SPSS…TPPL) and 74-90 (PSPS…SAGS). An HXXXXD motif motif is present at residues 229–234 (HQTEAD).

This sequence belongs to the GPAT/DAPAT family.

The protein localises to the plastid. The protein resides in the chloroplast stroma. It catalyses the reaction sn-glycerol 3-phosphate + an acyl-CoA = a 1-acyl-sn-glycero-3-phosphate + CoA. Its pathway is phospholipid metabolism; CDP-diacylglycerol biosynthesis; CDP-diacylglycerol from sn-glycerol 3-phosphate: step 1/3. In terms of biological role, esterifies acyl-group from acyl-ACP to the sn-1 position of glycerol-3-phosphate. The enzyme from chilling-resistant plants discriminates against non-fluid palmitic acid and selects oleic acid whereas the enzyme from sensitive plants accepts both fatty acids. The polypeptide is Glycerol-3-phosphate acyltransferase, chloroplastic (Carthamus tinctorius (Safflower)).